The primary structure comprises 105 residues: EASTCGSTPYSASQVRAAANAACQYYQSDDTAGSTTYPHTYNNYEGFDFAVNGPYQEFPIRTGGVYSGGSPGADRVIINTSCQYAGAITHTGASGNNFVGCSNST.

Disulfide bonds link cysteine 5–cysteine 101 and cysteine 23–cysteine 82. The active site involves histidine 39. Glutamate 57 acts as the Proton acceptor in catalysis. The active-site Proton donor is histidine 90.

It belongs to the ribonuclease N1/T1 family.

It carries out the reaction [RNA] containing guanosine + H2O = an [RNA fragment]-3'-guanosine-3'-phosphate + a 5'-hydroxy-ribonucleotide-3'-[RNA fragment].. The protein is Extracellular guanyl-specific ribonuclease Fl1 of Gibberella baccata (Fusarium lateritium).